Here is a 245-residue protein sequence, read N- to C-terminus: Uridylate kinase (245 aa).

18–21 (KLSG) serves as a coordination point for ATP. G60 is a binding site for UMP. ATP-binding residues include G61 and R65. UMP-binding positions include D80 and 141 to 148 (TGNPFFTT). Residues T168, Y174, and D177 each contribute to the ATP site.

It belongs to the UMP kinase family. In terms of assembly, homohexamer.

It is found in the cytoplasm. It catalyses the reaction UMP + ATP = UDP + ADP. Its pathway is pyrimidine metabolism; CTP biosynthesis via de novo pathway; UDP from UMP (UMPK route): step 1/1. With respect to regulation, inhibited by UTP. Catalyzes the reversible phosphorylation of UMP to UDP. In Pseudomonas aeruginosa (strain UCBPP-PA14), this protein is Uridylate kinase.